We begin with the raw amino-acid sequence, 141 residues long: Cytochrome c-type biogenesis protein CcmE (141 aa).

Residues 1 to 7 (MQRKHKR) lie on the Cytoplasmic side of the membrane. The chain crosses the membrane as a helical; Signal-anchor for type II membrane protein span at residues 8 to 28 (ILFVAVSFIALGCVSAFVLFE). Topologically, residues 29 to 141 (LSKSISFFCT…SSDAAVIGSS (113 aa)) are periplasmic. Residues histidine 121 and tyrosine 125 each coordinate heme.

The protein belongs to the CcmE/CycJ family.

It localises to the cell inner membrane. Its function is as follows. Heme chaperone required for the biogenesis of c-type cytochromes. Transiently binds heme delivered by CcmC and transfers the heme to apo-cytochromes in a process facilitated by CcmF and CcmH. The polypeptide is Cytochrome c-type biogenesis protein CcmE (Anaplasma phagocytophilum (strain HZ)).